The chain runs to 150 residues: Large ribosomal subunit protein bL9 (150 aa).

This sequence belongs to the bacterial ribosomal protein bL9 family.

Functionally, binds to the 23S rRNA. This is Large ribosomal subunit protein bL9 from Latilactobacillus sakei subsp. sakei (strain 23K) (Lactobacillus sakei subsp. sakei).